The primary structure comprises 289 residues: Protease HtpX homolog (289 aa).

A run of 2 helical transmembrane segments spans residues 11-31 and 34-54; these read AALFGVLWAVLLGLGAIIAAG and STTPIWIMALIGVATTAYGYW. H138 serves as a coordination point for Zn(2+). Residue E139 is part of the active site. H142 provides a ligand contact to Zn(2+). 2 consecutive transmembrane segments (helical) span residues 152-172 and 182-202; these read SVVAAVAGVITSVGQMLLIFG and LATIAMALLAPFAASLIQMAI. E207 contributes to the Zn(2+) binding site.

Belongs to the peptidase M48B family. The cofactor is Zn(2+).

It is found in the cell membrane. This Paenarthrobacter aurescens (strain TC1) protein is Protease HtpX homolog.